We begin with the raw amino-acid sequence, 153 residues long: Ribosome maturation factor RimP (153 aa).

This sequence belongs to the RimP family.

It localises to the cytoplasm. Required for maturation of 30S ribosomal subunits. This Vesicomyosocius okutanii subsp. Calyptogena okutanii (strain HA) protein is Ribosome maturation factor RimP.